We begin with the raw amino-acid sequence, 221 residues long: Transcription antitermination protein NusB (221 aa).

This sequence belongs to the NusB family.

In terms of biological role, involved in transcription antitermination. Required for transcription of ribosomal RNA (rRNA) genes. Binds specifically to the boxA antiterminator sequence of the ribosomal RNA (rrn) operons. This chain is Transcription antitermination protein NusB, found in Synechocystis sp. (strain ATCC 27184 / PCC 6803 / Kazusa).